Reading from the N-terminus, the 209-residue chain is FMN-dependent NADH:quinone oxidoreductase (209 aa).

FMN-binding positions include Ser18, 102 to 105, and 146 to 149; these read MYNF and SRGG.

The protein belongs to the azoreductase type 1 family. In terms of assembly, homodimer. It depends on FMN as a cofactor.

The catalysed reaction is 2 a quinone + NADH + H(+) = 2 a 1,4-benzosemiquinone + NAD(+). The enzyme catalyses N,N-dimethyl-1,4-phenylenediamine + anthranilate + 2 NAD(+) = 2-(4-dimethylaminophenyl)diazenylbenzoate + 2 NADH + 2 H(+). In terms of biological role, quinone reductase that provides resistance to thiol-specific stress caused by electrophilic quinones. Also exhibits azoreductase activity. Catalyzes the reductive cleavage of the azo bond in aromatic azo compounds to the corresponding amines. This chain is FMN-dependent NADH:quinone oxidoreductase, found in Saccharophagus degradans (strain 2-40 / ATCC 43961 / DSM 17024).